We begin with the raw amino-acid sequence, 365 residues long: Keratin-associated protein 10-6 (365 aa).

29 consecutive repeat copies span residues 41–45, 46–50, 67–71, 89–93, 99–103, 109–113, 114–118, 119–123, 124–128, 129–133, 135–139, 145–149, 155–159, 160–164, 172–176, 186–190, 208–212, 218–222, 228–232, 233–237, 238–242, 250–254, 260–264, 270–274, 282–286, 292–296, 297–301, 316–320, and 334–338. The interval 41 to 338 is 29 X 5 AA repeats of C-C-X(3); it reads CCEPPCCAPA…SCQPSCCRTA (298 aa).

The protein belongs to the KRTAP type 10 family. Interacts with hair keratins. Restricted to a narrow region of the hair fiber cuticle, lying approximately 20 cell layers above the apex of the dermal papilla of the hair root; not detected in any other tissues.

In terms of biological role, in the hair cortex, hair keratin intermediate filaments are embedded in an interfilamentous matrix, consisting of hair keratin-associated proteins (KRTAP), which are essential for the formation of a rigid and resistant hair shaft through their extensive disulfide bond cross-linking with abundant cysteine residues of hair keratins. The matrix proteins include the high-sulfur and high-glycine-tyrosine keratins. The sequence is that of Keratin-associated protein 10-6 (KRTAP10-6) from Homo sapiens (Human).